The sequence spans 236 residues: tRNA (guanine-N(7)-)-methyltransferase (236 aa).

Positions 43, 68, 102, and 125 each coordinate S-adenosyl-L-methionine. The substrate site is built by lysine 129 and aspartate 161.

This sequence belongs to the class I-like SAM-binding methyltransferase superfamily. TrmB family.

It carries out the reaction guanosine(46) in tRNA + S-adenosyl-L-methionine = N(7)-methylguanosine(46) in tRNA + S-adenosyl-L-homocysteine. Its pathway is tRNA modification; N(7)-methylguanine-tRNA biosynthesis. Its function is as follows. Catalyzes the formation of N(7)-methylguanine at position 46 (m7G46) in tRNA. This Ruminiclostridium cellulolyticum (strain ATCC 35319 / DSM 5812 / JCM 6584 / H10) (Clostridium cellulolyticum) protein is tRNA (guanine-N(7)-)-methyltransferase.